The primary structure comprises 119 residues: Immunoglobulin heavy variable 3-15 (119 aa).

Positions 1–19 (MEFGLSWIFLAAILKGVQC) are cleaved as a signal peptide. The interval 20-44 (EVQLVESGGGLVKPGGSLRLSCAAS) is framework-1. The Ig-like domain occupies 20–119 (EVQLVESGGG…EDTAVYYCTT (100 aa)). A disulfide bridge links C41 with C117. Residues 45 to 52 (GFTFSNAW) form a complementarity-determining-1 region. A framework-2 region spans residues 53–69 (MSWVRQAPGKGLEWVGR). The complementarity-determining-2 stretch occupies residues 70–79 (IKSKTDGGTT). Residues 80–117 (DYAAPVKGRFTISRDDSKNTLYLQMNSLKTEDTAVYYC) are framework-3. Residues 118 to 119 (TT) form a complementarity-determining-3 region.

Immunoglobulins are composed of two identical heavy chains and two identical light chains; disulfide-linked.

The protein resides in the secreted. The protein localises to the cell membrane. Functionally, v region of the variable domain of immunoglobulin heavy chains that participates in the antigen recognition. Immunoglobulins, also known as antibodies, are membrane-bound or secreted glycoproteins produced by B lymphocytes. In the recognition phase of humoral immunity, the membrane-bound immunoglobulins serve as receptors which, upon binding of a specific antigen, trigger the clonal expansion and differentiation of B lymphocytes into immunoglobulins-secreting plasma cells. Secreted immunoglobulins mediate the effector phase of humoral immunity, which results in the elimination of bound antigens. The antigen binding site is formed by the variable domain of one heavy chain, together with that of its associated light chain. Thus, each immunoglobulin has two antigen binding sites with remarkable affinity for a particular antigen. The variable domains are assembled by a process called V-(D)-J rearrangement and can then be subjected to somatic hypermutations which, after exposure to antigen and selection, allow affinity maturation for a particular antigen. The protein is Immunoglobulin heavy variable 3-15 of Homo sapiens (Human).